The chain runs to 420 residues: CinA-like protein (420 aa).

It belongs to the CinA family.

This chain is CinA-like protein, found in Geotalea uraniireducens (strain Rf4) (Geobacter uraniireducens).